The following is a 483-amino-acid chain: 3-isopropylmalate dehydratase large subunit (483 aa).

[4Fe-4S] cluster is bound by residues cysteine 361, cysteine 424, and cysteine 427.

This sequence belongs to the aconitase/IPM isomerase family. LeuC type 1 subfamily. In terms of assembly, heterodimer of LeuC and LeuD. It depends on [4Fe-4S] cluster as a cofactor.

The catalysed reaction is (2R,3S)-3-isopropylmalate = (2S)-2-isopropylmalate. The protein operates within amino-acid biosynthesis; L-leucine biosynthesis; L-leucine from 3-methyl-2-oxobutanoate: step 2/4. Functionally, catalyzes the isomerization between 2-isopropylmalate and 3-isopropylmalate, via the formation of 2-isopropylmaleate. The protein is 3-isopropylmalate dehydratase large subunit of Polaromonas naphthalenivorans (strain CJ2).